Here is a 118-residue protein sequence, read N- to C-terminus: Acidic elicitin A1 (118 aa).

Positions 1–20 (MNFRALFAATVAALVGSTSA) are cleaved as a signal peptide. 3 cysteine pairs are disulfide-bonded: C23–C91, C47–C76, and C71–C115.

It belongs to the elicitin family.

It localises to the secreted. Induces local and distal defense responses (incompatible hypersensitive reaction) in plants from the solanaceae and cruciferae families. Elicits leaf necrosis and causes the accumulation of pathogenesis-related proteins. Might interact with the lipidic molecules of the plasma membrane. The chain is Acidic elicitin A1 (B14) from Phytophthora cryptogea.